The primary structure comprises 179 residues: Diphosphoinositol polyphosphate phosphohydrolase 2 (179 aa).

Substrate is bound by residues arginine 9, 17 to 19, and 38 to 40; these read KKR and SSR. The region spanning 17–143 is the Nudix hydrolase domain; that stretch reads KKRAACLCFR…VHAEYLEKLK (127 aa). Mg(2+) contacts are provided by glycine 49 and glutamate 65. Residues 50 to 71 carry the Nudix box motif; it reads GGMEPEEEPGGAAVREVYEEAG. Glutamate 68 serves as the catalytic Proton acceptor. Glutamate 69 contacts Mg(2+). Substrate is bound by residues 88 to 90, arginine 114, and lysine 132; that span reads RKH.

The protein belongs to the Nudix hydrolase family. DIPP subfamily. Mg(2+) is required as a cofactor. The cofactor is Mn(2+).

The protein localises to the cytoplasm. The enzyme catalyses diphospho-myo-inositol polyphosphate + H2O = myo-inositol polyphosphate + phosphate.. It catalyses the reaction 5-diphospho-1D-myo-inositol 1,2,3,4,6-pentakisphosphate + H2O = 1D-myo-inositol hexakisphosphate + phosphate + H(+). The catalysed reaction is 3,5-bis(diphospho)-1D-myo-inositol 1,2,4,6-tetrakisphosphate + H2O = 3-diphospho-1D-myo-inositol 1,2,4,5,6-pentakisphosphate + phosphate + 2 H(+). It carries out the reaction 5-diphospho-1D-myo-inositol 1,3,4,6-tetrakisphosphate + H2O = 1D-myo-inositol 1,3,4,5,6-pentakisphosphate + phosphate + H(+). The enzyme catalyses P(1),P(6)-bis(5'-adenosyl) hexaphosphate + H2O = 2 ATP + 2 H(+). It catalyses the reaction P(1),P(5)-bis(5'-adenosyl) pentaphosphate + H2O = ADP + ATP + 2 H(+). The catalysed reaction is 5-phospho-alpha-D-ribose 1-diphosphate + H2O = alpha-D-ribose 1,5-bisphosphate + phosphate + H(+). In terms of biological role, cleaves the beta-phosphate from diphosphoinositol polyphosphates such as PP-InsP5 (diphosphoinositol pentakisphosphate), PP-InsP4 (diphosphoinositol tetrakisphosphate) and [PP]2-InsP4 (bisdiphosphoinositol tetrakisphosphate), suggesting that it may play a role in signal transduction. Diadenosine polyphosphates, particularly Ap6A (P(1),P(6)-bis(5a-adenosyl) hexaphosphate) and Ap5A (P(1),P(5)-bis(5'-adenosyl) pentaphosphate) are downstream effectors of a signaling cascade that regulates cardiac KATP channels, can also be substrates, although with lower preference than the diphosphoinositol polyphosphates. Can also catalyze the hydrolysis of 5-phosphoribose 1-diphosphate, generating the glycolytic activator ribose 1,5-bisphosphate. Does not play a role in U8 snoRNA decapping activity. Binds U8 snoRNA. This chain is Diphosphoinositol polyphosphate phosphohydrolase 2, found in Mus musculus (Mouse).